A 988-amino-acid chain; its full sequence is uncharacterized protein (988 aa).

The signal sequence occupies residues 1 to 17 (MIRLVFLFLLVVLSVEL). The disordered stretch occupies residues 111 to 176 (YQNPSTFPST…SKLNQKSSKS (66 aa)). A compositionally biased stretch (low complexity) spans 114 to 140 (PSTFPSTTTASTTTSTTTMPPTYQTTT). Asn247, Asn389, Asn529, and Asn601 each carry an N-linked (GlcNAc...) asparagine glycan. The helical transmembrane segment at 690-710 (IMIFTIFSVLSALTCLMCMYL) threads the bilayer. A glycan (N-linked (GlcNAc...) asparagine) is linked at Asn720. The next 6 helical transmembrane spans lie at 721–741 (LTAV…AFII), 753–773 (LLFP…TVLI), 784–804 (VLIA…WLLL), 832–852 (MILL…IFAL), 864–884 (LMIS…LPLI), and 891–911 (TVMA…SHTG). Positions 966–988 (RSEDTLRRNTSLYGTEGYELPTP) are disordered. Residue Asn974 is glycosylated (N-linked (GlcNAc...) asparagine).

The protein resides in the membrane. This is an uncharacterized protein from Caenorhabditis elegans.